The primary structure comprises 114 residues: uncharacterized protein (114 aa).

The disordered stretch occupies residues 90-114 (VESSQKRKPEESTIGMDAPKKMKRG).

This is an uncharacterized protein from Caenorhabditis elegans.